A 567-amino-acid polypeptide reads, in one-letter code: Urease subunit alpha (567 aa).

The region spanning 128-567 (GGIDPHIHFI…LPLAQLYHLF (440 aa)) is the Urease domain. Positions 133, 135, and 216 each coordinate Ni(2+). Lys-216 carries the N6-carboxylysine modification. His-218 serves as a coordination point for substrate. Positions 245 and 271 each coordinate Ni(2+). His-319 (proton donor) is an active-site residue. Residue Asp-359 coordinates Ni(2+).

This sequence belongs to the metallo-dependent hydrolases superfamily. Urease alpha subunit family. Heterotrimer of UreA (gamma), UreB (beta) and UreC (alpha) subunits. Three heterotrimers associate to form the active enzyme. Ni cation is required as a cofactor. Post-translationally, carboxylation allows a single lysine to coordinate two nickel ions.

Its subcellular location is the cytoplasm. It catalyses the reaction urea + 2 H2O + H(+) = hydrogencarbonate + 2 NH4(+). It participates in nitrogen metabolism; urea degradation; CO(2) and NH(3) from urea (urease route): step 1/1. In Marinobacter nauticus (strain ATCC 700491 / DSM 11845 / VT8) (Marinobacter aquaeolei), this protein is Urease subunit alpha.